The primary structure comprises 1012 residues: Roundabout homolog 4 (1012 aa).

Positions M1–A27 are cleaved as a signal peptide. 2 Ig-like C2-type domains span residues P32–S132 and E138–S225. Intrachain disulfides connect C53/C115 and C159/C208. N-linked (GlcNAc...) asparagine glycans are attached at residues N201 and N247. Fibronectin type-III domains lie at T249–Q346 and P348–A443. Residues N361, N390, and N397 are each glycosylated (N-linked (GlcNAc...) asparagine). 2 disordered regions span residues T533–P553 and L586–S616. A compositionally biased stretch (low complexity) spans S534–G550. Residues S592–K601 are compositionally biased toward pro residues. N681 and N713 each carry an N-linked (GlcNAc...) asparagine glycan. The disordered stretch occupies residues H711–V801. A compositionally biased stretch (low complexity) spans L745–S759. Residues V760–A771 are compositionally biased toward polar residues. N-linked (GlcNAc...) asparagine glycosylation is found at N762 and N783. Residues S772–S791 are compositionally biased toward low complexity. Residues S814 and S947 each carry the phosphoserine modification. A disordered region spans residues R980–S1012.

The protein belongs to the immunoglobulin superfamily. ROBO family. Interacts with SLIT2 and ENAH. As to expression, expressed specifically in embryo and adult vascular endothelium.

Receptor for Slit proteins, at least for SLIT2, and seems to be involved in angiogenesis and vascular patterning. May mediate the inhibition of primary endothelial cell migration by Slit proteins. Involved in the maintenance of endothelial barrier organization and function. This Mus musculus (Mouse) protein is Roundabout homolog 4 (Robo4).